A 197-amino-acid chain; its full sequence is Holliday junction branch migration complex subunit RuvA (197 aa).

Positions Met1–His63 are domain I. Positions Thr64–Leu142 are domain II. Residues Phe143 to Glu149 are flexible linker. Residues Glu149–Lys197 are domain III.

Belongs to the RuvA family. In terms of assembly, homotetramer. Forms an RuvA(8)-RuvB(12)-Holliday junction (HJ) complex. HJ DNA is sandwiched between 2 RuvA tetramers; dsDNA enters through RuvA and exits via RuvB. An RuvB hexamer assembles on each DNA strand where it exits the tetramer. Each RuvB hexamer is contacted by two RuvA subunits (via domain III) on 2 adjacent RuvB subunits; this complex drives branch migration. In the full resolvosome a probable DNA-RuvA(4)-RuvB(12)-RuvC(2) complex forms which resolves the HJ.

Its subcellular location is the cytoplasm. The RuvA-RuvB-RuvC complex processes Holliday junction (HJ) DNA during genetic recombination and DNA repair, while the RuvA-RuvB complex plays an important role in the rescue of blocked DNA replication forks via replication fork reversal (RFR). RuvA specifically binds to HJ cruciform DNA, conferring on it an open structure. The RuvB hexamer acts as an ATP-dependent pump, pulling dsDNA into and through the RuvAB complex. HJ branch migration allows RuvC to scan DNA until it finds its consensus sequence, where it cleaves and resolves the cruciform DNA. The protein is Holliday junction branch migration complex subunit RuvA of Anoxybacillus flavithermus (strain DSM 21510 / WK1).